A 153-amino-acid chain; its full sequence is MTHDNKLQVEAIKRGTVIDHIPAQVGFKLLTLFKLTETDQRITIGLNLPSGEMGRKDLIKIENTFLTDEQVNQLSLYAPQATVNRIDDYEVVGKSRPSLPDRIDSVLVCPNSNCISHAEPVSSSFAVKKRADDIALKCKYCEKEFSHYVVLAN.

Positions 109, 114, 138, and 141 each coordinate Zn(2+).

This sequence belongs to the PyrI family. In terms of assembly, contains catalytic and regulatory chains. Zn(2+) is required as a cofactor.

In terms of biological role, involved in allosteric regulation of aspartate carbamoyltransferase. This chain is Aspartate carbamoyltransferase regulatory chain, found in Klebsiella pneumoniae subsp. pneumoniae (strain ATCC 700721 / MGH 78578).